A 301-amino-acid polypeptide reads, in one-letter code: NAD kinase 2 (301 aa).

The active-site Proton acceptor is aspartate 77. Residues 77–78, arginine 82, 151–152, lysine 162, aspartate 181, and 192–197 each bind NAD(+); these read DG, NE, and TAYAFS.

This sequence belongs to the NAD kinase family. The cofactor is a divalent metal cation.

The protein resides in the cytoplasm. It carries out the reaction NAD(+) + ATP = ADP + NADP(+) + H(+). In terms of biological role, involved in the regulation of the intracellular balance of NAD and NADP, and is a key enzyme in the biosynthesis of NADP. Catalyzes specifically the phosphorylation on 2'-hydroxyl of the adenosine moiety of NAD to yield NADP. This is NAD kinase 2 from Streptomyces coelicolor (strain ATCC BAA-471 / A3(2) / M145).